We begin with the raw amino-acid sequence, 506 residues long: Nostrin (506 aa).

The F-BAR domain maps to 1–260; the sequence is MRDPLTDCSY…AISKVDVEKD (260 aa). Ser114 carries the phosphoserine modification. Coiled coils occupy residues 160-230 and 305-334; these read SLTQ…LNQY and KLGRLQRDIEKASRDKEGLERKLKALASSS. Positions 292–372 constitute an REM-1 domain; the sequence is PMDKERRKSL…SYKLSSVLAD (81 aa). Positions 413-435 are disordered; that stretch reads KAESKAPAGGQNNPSSSPSGSTV. Residues 419–435 are compositionally biased toward low complexity; the sequence is PAGGQNNPSSSPSGSTV. Residues 438–497 form the SH3 domain; that stretch reads ASKHLCKALYTFQARQDDELNLEKGDIVTVHEKKEEGWWFGSLKGKRGHFPAAYVEELPP. Residue Ser479 is modified to Phosphoserine.

Homotrimer. Interacts with NOS3, DNM2, WASL and CAV1. Interacts with DAB2. Interacts (via SH3 domain) with DNM2; this interaction allows the recruitment of NOS3 to dynamin-positive structures.

The protein resides in the cell membrane. Its subcellular location is the cytoplasmic vesicle. It is found in the cytoplasm. It localises to the cytoskeleton. The protein localises to the nucleus. In terms of biological role, multivalent adapter protein which may decrease NOS3 activity by inducing its translocation away from the plasma membrane. This Mus musculus (Mouse) protein is Nostrin.